The following is a 117-amino-acid chain: Large ribosomal subunit protein bL19 (117 aa).

The protein belongs to the bacterial ribosomal protein bL19 family.

Its function is as follows. This protein is located at the 30S-50S ribosomal subunit interface and may play a role in the structure and function of the aminoacyl-tRNA binding site. The protein is Large ribosomal subunit protein bL19 of Photorhabdus laumondii subsp. laumondii (strain DSM 15139 / CIP 105565 / TT01) (Photorhabdus luminescens subsp. laumondii).